The chain runs to 693 residues: Auxin response factor 10 (693 aa).

The TF-B3 DNA-binding region spans 115 to 217 (FAKTLTQSDA…DLCVGIRRAK (103 aa)). One can recognise a PB1 domain in the interval 580–668 (TGHCKVFMES…DIGGDNVRKT (89 aa)).

Belongs to the ARF family. As to quaternary structure, homodimers and heterodimers. Expressed in the whole plant.

The protein localises to the nucleus. In terms of biological role, auxin response factors (ARFs) are transcriptional factors that bind specifically to the DNA sequence 5'-TGTCTC-3' found in the auxin-responsive promoter elements (AuxREs). Could act as transcriptional activator or repressor. Formation of heterodimers with Aux/IAA proteins may alter their ability to modulate early auxin response genes expression. This is Auxin response factor 10 (ARF10) from Arabidopsis thaliana (Mouse-ear cress).